The primary structure comprises 123 residues: MSVQNICSTKAYDMLISNDNAFLVDVRTREEWQQVGIPHLDNKNKMLFLSWQLNKDFEDNFLSIINDKIHAIIFFLCRSGYRSFIAANFITNIGYKNCYNISDGFEGNNQDKGWKQNNLPWQF.

In terms of domain architecture, Rhodanese spans 17-117; it reads SNDNAFLVDV…NNQDKGWKQN (101 aa).

This is an uncharacterized protein from Rickettsia rickettsii.